The sequence spans 299 residues: uncharacterized protein (299 aa).

This is an uncharacterized protein from Bacillus subtilis (strain 168).